The primary structure comprises 152 residues: Glutaredoxin-related protein 5, mitochondrial (152 aa).

Residues 1–31 (MSASLSRAAAALLRWGRSAGGGGLPGAGVRA) constitute a mitochondrion transit peptide. Residues 38–141 (AEQLDALVKK…EELKKLGIRS (104 aa)) form the Glutaredoxin domain. Lys-55 lines the glutathione pocket. Lys-55 is subject to N6-succinyllysine. Cys-63 is a [2Fe-2S] cluster binding site. Residues 93–97 (RQGIK), Ile-105, and 118–119 (CD) contribute to the glutathione site. Ser-151 carries the post-translational modification Phosphoserine.

It belongs to the glutaredoxin family. Monothiol subfamily. Homodimer. Interacts with ISCU. Interacts with BOLA1. As to expression, detected in bone, liver, muscle and kidney.

The protein localises to the mitochondrion matrix. Monothiol glutaredoxin involved in mitochondrial iron-sulfur (Fe/S) cluster transfer. Receives 2Fe/2S clusters from scaffold protein ISCU and mediates their transfer to apoproteins, to the 4Fe/FS cluster biosynthesis machinery, or export from mitochondrion. Required for normal regulation of hemoglobin synthesis by the iron-sulfur protein ACO1. In Mus musculus (Mouse), this protein is Glutaredoxin-related protein 5, mitochondrial (Glrx5).